Reading from the N-terminus, the 238-residue chain is ATP-dependent Clp protease proteolytic subunit 4 (238 aa).

Ser113 (nucleophile) is an active-site residue. The active site involves His138.

It belongs to the peptidase S14 family. In terms of assembly, fourteen ClpP subunits assemble into 2 heptameric rings which stack back to back to give a disk-like structure with a central cavity, resembling the structure of eukaryotic proteasomes.

The protein resides in the cytoplasm. The enzyme catalyses Hydrolysis of proteins to small peptides in the presence of ATP and magnesium. alpha-casein is the usual test substrate. In the absence of ATP, only oligopeptides shorter than five residues are hydrolyzed (such as succinyl-Leu-Tyr-|-NHMec, and Leu-Tyr-Leu-|-Tyr-Trp, in which cleavage of the -Tyr-|-Leu- and -Tyr-|-Trp bonds also occurs).. Its function is as follows. Cleaves peptides in various proteins in a process that requires ATP hydrolysis. Has a chymotrypsin-like activity. Plays a major role in the degradation of misfolded proteins. This Frankia casuarinae (strain DSM 45818 / CECT 9043 / HFP020203 / CcI3) protein is ATP-dependent Clp protease proteolytic subunit 4.